The primary structure comprises 233 residues: MEETMAEEGCCENVESTFDDGTNCISKTEDTGGIESKRFYLARTTAFEMLRDRGYEVNEAELSLTLSEFRSVFGEKPELERLRICVPLRSDPKKKILVVFMGTEPITVKSVRALHIQISNNVGLHAMILVLQSKMNHFAQKALTTFPFTVETFPIEDLLVNITKHIQQPKIEILNKEEKEQLLRKHALEDKQLPYLQEKDSFVRYYGLKKKQVVKITYSKEPVGDFVTYRCII.

Belongs to the archaeal Rpo5/eukaryotic RPB5 RNA polymerase subunit family. Component of the RNA polymerase V complex. In terms of tissue distribution, expressed in flower buds and siliques.

The protein localises to the nucleus. In terms of biological role, DNA-dependent RNA polymerase catalyzes the transcription of DNA into RNA using the four ribonucleoside triphosphates as substrates. Component of RNA polymerase V involved in RNA-directed DNA methylation-dependent (RdDM) silencing of endogenous repeated sequences, including transposable elements. This chain is DNA-directed RNA polymerase V subunit 5C (NRPE5C), found in Arabidopsis thaliana (Mouse-ear cress).